The following is a 429-amino-acid chain: Glucose-1-phosphate adenylyltransferase (429 aa).

Residues Gly-162, 177 to 178, and Ser-209 contribute to the alpha-D-glucose 1-phosphate site; that span reads EK.

The protein belongs to the bacterial/plant glucose-1-phosphate adenylyltransferase family. Homotetramer.

The enzyme catalyses alpha-D-glucose 1-phosphate + ATP + H(+) = ADP-alpha-D-glucose + diphosphate. It participates in glycan biosynthesis; glycogen biosynthesis. Involved in the biosynthesis of ADP-glucose, a building block required for the elongation reactions to produce glycogen. Catalyzes the reaction between ATP and alpha-D-glucose 1-phosphate (G1P) to produce pyrophosphate and ADP-Glc. The protein is Glucose-1-phosphate adenylyltransferase of Cyanothece sp. (strain PCC 7425 / ATCC 29141).